Consider the following 490-residue polypeptide: GTPase Der (490 aa).

2 consecutive EngA-type G domains span residues 3–166 (PVIA…PRDD) and 196–369 (IKIA…KSAV). Residues 9–16 (GRPNVGKS), 56–60 (DTGGI), and 118–121 (NKVD) contribute to the GTP site. Residues 162–189 (FPRDDDEPAEGEEEEVVAEGEEAKRIPG) form a disordered region. Acidic residues predominate over residues 164–181 (RDDDEPAEGEEEEVVAEG). Residues 202–209 (GRPNVGKS), 249–253 (DTAGV), and 314–317 (NKWD) each bind GTP. A KH-like domain is found at 370 to 454 (TRWPTSRLTQ…PIRIEFKGGE (85 aa)). The interval 453 to 490 (GENPYEGNKNTLTDRQVNKKRRLMSHNKKASKKRRDKK) is disordered. Residues 470–490 (NKKRRLMSHNKKASKKRRDKK) are compositionally biased toward basic residues.

This sequence belongs to the TRAFAC class TrmE-Era-EngA-EngB-Septin-like GTPase superfamily. EngA (Der) GTPase family. In terms of assembly, associates with the 50S ribosomal subunit.

GTPase that plays an essential role in the late steps of ribosome biogenesis. The sequence is that of GTPase Der from Pseudomonas fluorescens (strain Pf0-1).